The primary structure comprises 598 residues: Probable translation initiation factor IF-2 (598 aa).

The tr-type G domain occupies 3-225 (LRCPIVSVLG…GLAQKFLEQK (223 aa)). Residues 12–19 (GHVDHGKT) form a G1 region. Residue 12–19 (GHVDHGKT) participates in GTP binding. Residues 37–41 (GITQH) are G2. Residues 76-79 (DTPG) are G3. GTP is bound by residues 76–80 (DTPGH) and 130–133 (NKLD). A G4 region spans residues 130–133 (NKLD). Positions 200–202 (SAI) are G5.

This sequence belongs to the TRAFAC class translation factor GTPase superfamily. Classic translation factor GTPase family. IF-2 subfamily.

In terms of biological role, function in general translation initiation by promoting the binding of the formylmethionine-tRNA to ribosomes. Seems to function along with eIF-2. The polypeptide is Probable translation initiation factor IF-2 (Methanococcus vannielii (strain ATCC 35089 / DSM 1224 / JCM 13029 / OCM 148 / SB)).